A 255-amino-acid polypeptide reads, in one-letter code: Pre-miRNA 5'-monophosphate methyltransferase (255 aa).

S-adenosyl-L-methionine contacts are provided by residues Arg-32, Asn-66, Asp-96, 121–122 (DI), and Met-150. The Bin3-type SAM domain occupies 41 to 253 (LHKLFRKPAE…SLLLFKIQRH (213 aa)).

It belongs to the methyltransferase superfamily.

It is found in the cytoplasm. The catalysed reaction is a 5'-end 5'-phospho-ribonucleoside-RNA + S-adenosyl-L-methionine = a 5'-end (5'-methylphospho)-ribonucleoside-RNA + S-adenosyl-L-homocysteine. It catalyses the reaction a 5'-end 5'-phospho-ribonucleoside-RNA + 2 S-adenosyl-L-methionine = a 5'-end (5'-bismethylphospho)-ribonucleoside-RNA + 2 S-adenosyl-L-homocysteine. In terms of biological role, O-methyltransferase that specifically monomethylates 5'-monophosphate of cytoplasmic histidyl tRNA (tRNA(His)), acting as a capping enzyme by protecting tRNA(His) from cleavage by DICER1. Also able, with less efficiently, to methylate the 5' monophosphate of a subset of pre-miRNAs, acting as a negative regulator of miRNA processing. The 5' monophosphate of pre-miRNAs is recognized by DICER1 and is required for pre-miRNAs processing: methylation at this position reduces the processing of pre-miRNAs by DICER1. Was also reported to mediate dimethylation of pre-miR-145; however dimethylation cannot be reproduced by another group which observes a monomethylation of pre-miR-145. This Xenopus laevis (African clawed frog) protein is Pre-miRNA 5'-monophosphate methyltransferase (bcdin3d).